The sequence spans 179 residues: MQRQTGHMEDKKRTGLESQGTENAFSDGRDGKDGLLHEGINEPILIPSTIADLEGIRELVRKFRGRLLPFEKCPDFCLRIGGLEASFHKGQEELLEYCEALYLPQPVKMEIVGIVDDVPCLATGMQLLILVAEGGEVYAYEEDTLHKLATSFSEFLEIGVKSLGREVYHCGEYIEQVVH.

Basic and acidic residues predominate over residues 1-15 (MQRQTGHMEDKKRTG). The tract at residues 1–32 (MQRQTGHMEDKKRTGLESQGTENAFSDGRDGK) is disordered.

This is an uncharacterized protein from Gallus gallus (Chicken).